The sequence spans 1788 residues: U3 small nucleolar RNA-associated protein 10 (1788 aa).

The HEAT 1 repeat unit spans residues 585–622 (LDFQAVVPYAIVALSDPAKKVRRAAAELVTVLGSFYET). A disordered region spans residues 884–905 (PATKRRRVGSSEKSVDSQSPAD). 6 HEAT repeats span residues 926-962 (AKHPELLPSLFTTLSELQHLRTVVGSELGYLQSLVLS), 1049-1086 (QTVKEVIPPLIETFRKSRRNLVASTAELLTSFVVAYEH), 1257-1294 (LSIAEFIKSVEALLDRPNVILRQKVLRALERRVDSESI), 1301-1339 (EALLAFLPQLTAVIRESDDMNYKHTAVNCVDKIAEKYGK), 1703-1740 (EHHKEINSALLKHLRSEQAAVRLAVIKCEQELTARLGE), and 1744-1781 (QSLPEMLPFISELQDDDDEVVERENRRWIVGIEETLGE).

It belongs to the HEATR1/UTP10 family. Component of the ribosomal small subunit (SSU) processome.

The protein localises to the nucleus. Its subcellular location is the nucleolus. Its function is as follows. Involved in nucleolar processing of pre-18S ribosomal RNA. Involved in ribosome biosynthesis. This is U3 small nucleolar RNA-associated protein 10 (rbg-5) from Neurospora crassa (strain ATCC 24698 / 74-OR23-1A / CBS 708.71 / DSM 1257 / FGSC 987).